The primary structure comprises 132 residues: Small ribosomal subunit protein uS11 (132 aa).

The segment at 110-132 (IEDVTPVPSDSTRRKGGRRGRRL) is disordered. Residues 123-132 (RKGGRRGRRL) show a composition bias toward basic residues.

Belongs to the universal ribosomal protein uS11 family. As to quaternary structure, component of the small ribosomal subunit. Mature ribosomes consist of a small (40S) and a large (60S) subunit. The 40S subunit contains about 32 different proteins and 1 molecule of RNA (18S). The 60S subunit contains 45 different proteins and 3 molecules of RNA (25S, 5.8S and 5S).

Its subcellular location is the cytoplasm. In terms of biological role, component of the ribosome, a large ribonucleoprotein complex responsible for the synthesis of proteins in the cell. The small ribosomal subunit (SSU) binds messenger RNAs (mRNAs) and translates the encoded message by selecting cognate aminoacyl-transfer RNA (tRNA) molecules. The large subunit (LSU) contains the ribosomal catalytic site termed the peptidyl transferase center (PTC), which catalyzes the formation of peptide bonds, thereby polymerizing the amino acids delivered by tRNAs into a polypeptide chain. The nascent polypeptides leave the ribosome through a tunnel in the LSU and interact with protein factors that function in enzymatic processing, targeting, and the membrane insertion of nascent chains at the exit of the ribosomal tunnel. RPS14B is involved in nucleolar processing of pre-18S ribosomal RNA and ribosome assembly. The protein is Small ribosomal subunit protein uS11 (RPS14B) of Candida albicans (strain SC5314 / ATCC MYA-2876) (Yeast).